Reading from the N-terminus, the 362-residue chain is Putative F-box/kelch-repeat protein At3g20710 (362 aa).

The F-box domain occupies 1 to 50 (MMMSNLPKDLVEEILSRVPFKYLRAIRSTCKNWYDLSKNRSFANKNIDKA). 2 Kelch repeats span residues 150 to 201 (YDKS…VSLN) and 293 to 341 (IYCR…YFKS).

The polypeptide is Putative F-box/kelch-repeat protein At3g20710 (Arabidopsis thaliana (Mouse-ear cress)).